We begin with the raw amino-acid sequence, 274 residues long: Prothoracicostatic peptide (274 aa).

Positions 1–19 (MRWCLFALWVFGVATVVTA) are cleaved as a signal peptide. The propeptide occupies 20–67 (AEEPHHDAAPQTDNEVDLTEDDKRAWSSLHSGWAKRAWQDMSSAWGKR). Position 76 is a tryptophan amide (tryptophan 76). Residues 77–91 (GKRGWQDLNSAWGKR) constitute a propeptide that is removed on maturation. Tryptophan 100 is subject to Tryptophan amide. A propeptide spanning residues 101–136 (GKRGWQDLNSAWGKRDDDEAMEKKSWQDLNSVWGKR) is cleaved from the precursor. Tryptophan 145 carries the tryptophan amide modification. Residues 146 to 148 (GKR) constitute a propeptide that is removed on maturation. Tryptophan 157 is modified (tryptophan amide). A propeptide spanning residues 158 to 172 (GKRGWNDISSVWGKR) is cleaved from the precursor. Tryptophan amide is present on tryptophan 181. Positions 182–274 (GKRAWQDMSS…NEHSATTNEA (93 aa)) are excised as a propeptide.

The protein localises to the secreted. Functionally, inhibits ecdysteroid biosynthesis in the prothoracic gland of fifth instar larvae, with maximum inhibition during the spinning stage. When administered to day 8 fifth instar larvae it produces a significant delay in the commencement spinning behavior. This Bombyx mori (Silk moth) protein is Prothoracicostatic peptide.